A 252-amino-acid polypeptide reads, in one-letter code: uncharacterized protein (252 aa).

2 stretches are compositionally biased toward polar residues: residues 108 to 122 (RTTM…SSSE) and 136 to 153 (MPNT…NSQS). Positions 108–252 (RTTMRQGRFP…LIWNDSSSSK (145 aa)) are disordered. The span at 154–172 (TEKEDAMYSKDNGFEDRSK) shows a compositional bias: basic and acidic residues. Over residues 201–226 (VKSTDSAFSGQENSEAFPSRTSNLGS) the composition is skewed to polar residues.

The protein localises to the cytoplasm. The protein resides in the mitochondrion. It localises to the nucleus. This is an uncharacterized protein from Schizosaccharomyces pombe (strain 972 / ATCC 24843) (Fission yeast).